Here is a 492-residue protein sequence, read N- to C-terminus: Protein GvpD2 (492 aa).

ATP is bound at residue 39–46 (GAPGTGKT). Positions 355–368 (RDHDDAVDPDRLPG) are enriched in basic and acidic residues. Residues 355 to 379 (RDHDDAVDPDRLPGHDTTPTEHGTL) form a disordered region.

The protein belongs to the gas vesicle GvpD family. Homodimer. Interacts with GvpE, also with GvpE from H.mediterranei.

The protein localises to the cytoplasm. Its function is as follows. Causes a decrease in the amount of GvpE protein. Gas vesicles are hollow, gas filled proteinaceous nanostructures found in several microbial planktonic microorganisms. They allow positioning of halobacteria at the optimal depth for growth in the poorly aerated, shallow brine pools of their habitat. Expression of 2 c-vac DNA fragments containing 2 divergently transcribed regions (gvpE-gvpF-gvpG-gvpH-gvpI-gvpJ-gvpK-gvpL-gvpM and gvpA-gvpC-gvpN-gvpO) allows H.volcanii to produce gas vesicles. The polypeptide is Protein GvpD2 (Halobacterium salinarum (strain ATCC 700922 / JCM 11081 / NRC-1) (Halobacterium halobium)).